The primary structure comprises 402 residues: MKLEKLPEEFVQAQPVLEKISEHGFEAYFVGGSVRDVLLGREIHDVDIATSAYPEEIKDIFPYTIDVGIEHGTVLVLAGKSEAEHYEITTFRTESKYTDYRRPDHVDFVRDLREDLKRRDFTVNAFACDFEGQIIDLFDGLTDLKERRLTAVGSALERFNEDALRIMRAMRFASTLDFKIEEKTFSAMRERSHLLEKISVERIFIELDKLLLGSEWRNGLTLLIESEAWKYLPDFQDLALKKVLTELSVDFHFKNSEQAWAALLTRFSNIDVKAFLRKWKVSNEFSKYVADLVSAYELENWDLVSLYHFGLEKALLVDELKIAFGRDIDRERAVFINDQLQIHDKSEIVIAGKDLMDEFSLKPGPELGKILKTIEEKIVKNELKNEQIAILTEVKKMLELEK.

The ATP site is built by Gly32 and Arg35. Positions 32 and 35 each coordinate CTP. Asp45 and Asp47 together coordinate Mg(2+). 5 residues coordinate ATP: Arg119, Asp162, Arg165, Arg168, and Arg171. The CTP site is built by Arg119, Asp162, Arg165, Arg168, and Arg171.

The protein belongs to the tRNA nucleotidyltransferase/poly(A) polymerase family. Bacterial CCA-adding enzyme type 3 subfamily. In terms of assembly, homodimer. It depends on Mg(2+) as a cofactor.

The catalysed reaction is a tRNA precursor + 2 CTP + ATP = a tRNA with a 3' CCA end + 3 diphosphate. The enzyme catalyses a tRNA with a 3' CCA end + 2 CTP + ATP = a tRNA with a 3' CCACCA end + 3 diphosphate. In terms of biological role, catalyzes the addition and repair of the essential 3'-terminal CCA sequence in tRNAs without using a nucleic acid template. Adds these three nucleotides in the order of C, C, and A to the tRNA nucleotide-73, using CTP and ATP as substrates and producing inorganic pyrophosphate. tRNA 3'-terminal CCA addition is required both for tRNA processing and repair. Also involved in tRNA surveillance by mediating tandem CCA addition to generate a CCACCA at the 3' terminus of unstable tRNAs. While stable tRNAs receive only 3'-terminal CCA, unstable tRNAs are marked with CCACCA and rapidly degraded. The chain is CCA-adding enzyme from Lactococcus lactis subsp. cremoris (strain MG1363).